We begin with the raw amino-acid sequence, 587 residues long: Aspartate--tRNA ligase (587 aa).

L-aspartate is bound at residue Glu-175. The segment at 199–202 (QQFK) is aspartate. The L-aspartate site is built by Arg-221 and His-446. 221-223 (RDE) is a binding site for ATP. Glu-480 is a binding site for ATP. Arg-487 serves as a coordination point for L-aspartate. 532–535 (GVDR) contributes to the ATP binding site.

The protein belongs to the class-II aminoacyl-tRNA synthetase family. Type 1 subfamily. As to quaternary structure, homodimer.

Its subcellular location is the cytoplasm. The enzyme catalyses tRNA(Asp) + L-aspartate + ATP = L-aspartyl-tRNA(Asp) + AMP + diphosphate. In terms of biological role, catalyzes the attachment of L-aspartate to tRNA(Asp) in a two-step reaction: L-aspartate is first activated by ATP to form Asp-AMP and then transferred to the acceptor end of tRNA(Asp). In Streptomyces avermitilis (strain ATCC 31267 / DSM 46492 / JCM 5070 / NBRC 14893 / NCIMB 12804 / NRRL 8165 / MA-4680), this protein is Aspartate--tRNA ligase.